The sequence spans 135 residues: uncharacterized protein (135 aa).

Residues 1–36 (MSHAEKPMSDSVNHHHHRTFEVLTAEPVRSRRKPRH) form a disordered region.

It belongs to the transposase 8 family.

This is an uncharacterized protein from Sinorhizobium fredii (strain NBRC 101917 / NGR234).